The following is a 216-amino-acid chain: Somatotropin (216 aa).

Residues 1 to 26 (MAAGPRTSMLLAFALLCLPWTQEVGA) form the signal peptide. Residue H45 participates in Zn(2+) binding. Cysteines 78 and 189 form a disulfide. Position 131 is a phosphoserine (S131). Residue E198 participates in Zn(2+) binding. The cysteines at positions 206 and 214 are disulfide-linked.

Belongs to the somatotropin/prolactin family.

The protein resides in the secreted. Plays an important role in growth control. Its major role in stimulating body growth is to stimulate the liver and other tissues to secrete IGF1. It stimulates both the differentiation and proliferation of myoblasts. It also stimulates amino acid uptake and protein synthesis in muscle and other tissues. The polypeptide is Somatotropin (GH1) (Balaenoptera physalus (Fin whale)).